We begin with the raw amino-acid sequence, 370 residues long: Phospho-N-acetylmuramoyl-pentapeptide-transferase (370 aa).

Transmembrane regions (helical) follow at residues 15–35 (PLEGKVSAGVLAVVVYAAAFA), 44–64 (LLSLPLLIATLIAAIVTWWGV), 93–113 (MGGLLVVPVGVIVGGLISWSG), 115–135 (AAEQLLAVAFITLAYMVVGGI), 155–175 (LLLQALAAVIFLIWAGMRGWI), 183–203 (FDINLPLNWLIWPLAVFVFLA), 213–233 (GLDGLAAGCGALVFTGMALQL), 240–260 (GDPSLAGFCMAMAGCWIGFLV), 268–288 (VFMGDTGSLAMGGALTAVALL), 296–316 (LIMGGIFLAESLSVIIQVWVF), and 347–367 (QLVVPGFWLATVFLVLIGIFF).

The protein belongs to the glycosyltransferase 4 family. MraY subfamily. Requires Mg(2+) as cofactor.

The protein localises to the cell inner membrane. It carries out the reaction UDP-N-acetyl-alpha-D-muramoyl-L-alanyl-gamma-D-glutamyl-meso-2,6-diaminopimeloyl-D-alanyl-D-alanine + di-trans,octa-cis-undecaprenyl phosphate = di-trans,octa-cis-undecaprenyl diphospho-N-acetyl-alpha-D-muramoyl-L-alanyl-D-glutamyl-meso-2,6-diaminopimeloyl-D-alanyl-D-alanine + UMP. It functions in the pathway cell wall biogenesis; peptidoglycan biosynthesis. In terms of biological role, catalyzes the initial step of the lipid cycle reactions in the biosynthesis of the cell wall peptidoglycan: transfers peptidoglycan precursor phospho-MurNAc-pentapeptide from UDP-MurNAc-pentapeptide onto the lipid carrier undecaprenyl phosphate, yielding undecaprenyl-pyrophosphoryl-MurNAc-pentapeptide, known as lipid I. This Synechococcus sp. (strain CC9311) protein is Phospho-N-acetylmuramoyl-pentapeptide-transferase.